The following is a 245-amino-acid chain: DNA repair protein RecO (245 aa).

It belongs to the RecO family.

Functionally, involved in DNA repair and RecF pathway recombination. In Erwinia tasmaniensis (strain DSM 17950 / CFBP 7177 / CIP 109463 / NCPPB 4357 / Et1/99), this protein is DNA repair protein RecO.